Here is a 137-residue protein sequence, read N- to C-terminus: Large ribosomal subunit protein uL16 (137 aa).

The protein belongs to the universal ribosomal protein uL16 family. As to quaternary structure, part of the 50S ribosomal subunit.

Its function is as follows. Binds 23S rRNA and is also seen to make contacts with the A and possibly P site tRNAs. The sequence is that of Large ribosomal subunit protein uL16 from Legionella pneumophila (strain Paris).